We begin with the raw amino-acid sequence, 82 residues long: Myosin light chain alkali (82 aa).

Positions 7–42 (GCYEDFIECLKLYDKEENGTMLLAELQHALLALGEN) constitute an EF-hand domain.

As to quaternary structure, myosin is a hexamer of 2 heavy chains and 4 light chains.

In Drosophila teissieri (Fruit fly), this protein is Myosin light chain alkali (Mlc1).